A 137-amino-acid chain; its full sequence is uncharacterized protein (137 aa).

This is an uncharacterized protein from Archaeoglobus fulgidus (strain ATCC 49558 / DSM 4304 / JCM 9628 / NBRC 100126 / VC-16).